Consider the following 105-residue polypeptide: Large ribosomal subunit protein eL30 (105 aa).

The protein belongs to the eukaryotic ribosomal protein eL30 family.

The protein is Large ribosomal subunit protein eL30 (rpl30e) of Methanococcus vannielii (strain ATCC 35089 / DSM 1224 / JCM 13029 / OCM 148 / SB).